A 500-amino-acid polypeptide reads, in one-letter code: Xylan O-acetyltransferase 2 (500 aa).

The Cytoplasmic segment spans residues 1 to 25 (MGLPGRRNPLLSARRAAASLRRSRR). The helical; Signal-anchor for type II membrane protein transmembrane segment at 26 to 43 (LPVYVAAVFFVASVLLMF) threads the bilayer. The Lumenal segment spans residues 44–500 (RDEILYLTTA…RPPAAAGHVA (457 aa)). The tract at residues 84 to 116 (PVLLGHGGKPEKHHSVTERHRPKVSAKRRPNKK) is disordered. The span at 91-102 (GKPEKHHSVTER) shows a compositional bias: basic and acidic residues. Residues 103–116 (HRPKVSAKRRPNKK) show a composition bias toward basic residues. Cystine bridges form between cysteine 143–cysteine 194, cysteine 165–cysteine 231, cysteine 174–cysteine 472, and cysteine 388–cysteine 468. Asparagine 144 and asparagine 154 each carry an N-linked (GlcNAc...) asparagine glycan. Positions 218–220 (GDS) match the GDS motif motif. The active-site Nucleophile is the serine 220. 2 N-linked (GlcNAc...) asparagine glycosylation sites follow: asparagine 260 and asparagine 416. Catalysis depends on aspartate 467, which acts as the Proton donor. Residues 467–470 (DCIH) carry the DXXH motif motif. Histidine 470 (proton acceptor) is an active-site residue.

It belongs to the PC-esterase family. TBL subfamily. Expressed at low levels in roots and leaves.

It localises to the golgi apparatus membrane. In terms of biological role, xylan acetyltransferase required for 2-O- and 3-O-monoacetylation of xylosyl residues in xylan. Catalyzes the 2-O-acetylation of xylan, followed by nonenzymatic acetyl migration to the O-3 position, resulting in products that are monoacetylated at both O-2 and O-3 positions. The protein is Xylan O-acetyltransferase 2 of Oryza sativa subsp. japonica (Rice).